Consider the following 348-residue polypeptide: Protein RecA (348 aa).

69-76 lines the ATP pocket; it reads GPESSGKT.

Belongs to the RecA family.

It is found in the cytoplasm. Its function is as follows. Can catalyze the hydrolysis of ATP in the presence of single-stranded DNA, the ATP-dependent uptake of single-stranded DNA by duplex DNA, and the ATP-dependent hybridization of homologous single-stranded DNAs. It interacts with LexA causing its activation and leading to its autocatalytic cleavage. This chain is Protein RecA, found in Gluconacetobacter polyoxogenes (Acetobacter polyoxogenes).